Consider the following 127-residue polypeptide: UPF0102 protein Mmar10_3014 (127 aa).

It belongs to the UPF0102 family.

The polypeptide is UPF0102 protein Mmar10_3014 (Maricaulis maris (strain MCS10) (Caulobacter maris)).